The chain runs to 378 residues: Chorismate synthase (378 aa).

Residues Ile42–Gln61 are disordered. Arg49 is an NADP(+) binding site. FMN-binding positions include Arg126–Ser128, Gly287, Lys302–Thr306, and Arg328.

It belongs to the chorismate synthase family. As to quaternary structure, homotetramer. It depends on FMNH2 as a cofactor.

It catalyses the reaction 5-O-(1-carboxyvinyl)-3-phosphoshikimate = chorismate + phosphate. It participates in metabolic intermediate biosynthesis; chorismate biosynthesis; chorismate from D-erythrose 4-phosphate and phosphoenolpyruvate: step 7/7. Catalyzes the anti-1,4-elimination of the C-3 phosphate and the C-6 proR hydrogen from 5-enolpyruvylshikimate-3-phosphate (EPSP) to yield chorismate, which is the branch point compound that serves as the starting substrate for the three terminal pathways of aromatic amino acid biosynthesis. This reaction introduces a second double bond into the aromatic ring system. This Synechococcus sp. (strain JA-2-3B'a(2-13)) (Cyanobacteria bacterium Yellowstone B-Prime) protein is Chorismate synthase.